Consider the following 272-residue polypeptide: Undecaprenyl-diphosphatase (272 aa).

8 helical membrane passes run 4 to 24 (FEVI…FLPI), 43 to 63 (GGRV…CWLY), 86 to 106 (ISVL…VDFI), 109 to 129 (VLFS…IIFW), 145 to 165 (ITFK…IPGT), 186 to 206 (TEFS…FDLI), 222 to 242 (VGFV…VLFV), and 249 to 269 (VFAW…MFFN).

This sequence belongs to the UppP family.

It is found in the cell inner membrane. It carries out the reaction di-trans,octa-cis-undecaprenyl diphosphate + H2O = di-trans,octa-cis-undecaprenyl phosphate + phosphate + H(+). Functionally, catalyzes the dephosphorylation of undecaprenyl diphosphate (UPP). Confers resistance to bacitracin. The protein is Undecaprenyl-diphosphatase of Acinetobacter baumannii (strain AB307-0294).